We begin with the raw amino-acid sequence, 692 residues long: Vacuolar amino acid transporter 3 (692 aa).

A compositionally biased stretch (polar residues) spans 1 to 14 (MNGKEVSSGSGRTQ). The interval 1–71 (MNGKEVSSGS…TGGLLKKPPL (71 aa)) is disordered. Low complexity predominate over residues 15 to 24 (SNNNKKNNNG). Positions 28–38 (GISHASGSPLT) are enriched in polar residues. A phosphoserine mark is found at Ser-59, Ser-119, and Ser-121. 2 disordered regions span residues 135-170 (KWTNDHPSSPSQYQYPSQPALSTSIPSQAPSFSNRK) and 258-294 (DLSEEEEEEEETEEEPEEEALETESTQLVSREHGRHP). Residues 141-153 (PSSPSQYQYPSQP) are compositionally biased toward low complexity. Over residues 154–167 (ALSTSIPSQAPSFS) the composition is skewed to polar residues. A Phosphoserine modification is found at Ser-165. Residues 258–279 (DLSEEEEEEEETEEEPEEEALE) are compositionally biased toward acidic residues. A run of 11 helical transmembrane segments spans residues 302–322 (AVLLLLKSFVGTGVLFLPKAF), 329–349 (FSALCLLSCALISYGCFVSLI), 374–394 (FAILSSIALSQIGFSAAYTVF), 412–432 (GSISLATYIFAQVLIFVPLSL), 443–463 (ALIADLFILLGLVYVYVYSIY), 483–503 (WSLFIGTAIFTFEGIGLLIPI), 519–539 (AVMCIVAVIFISCGLLCYAAF), 561–581 (VQLLYALAILLSTPLQLFPAI), 607–627 (YFRCAIVVLTSILAWVGANDL), 630–650 (FVSLVGSFACIPLIYIYPPLL), and 665–685 (LLLDLIVIVFGVAVMAYTSWQ).

It belongs to the amino acid/polyamine transporter 2 family.

The protein localises to the vacuole membrane. In terms of biological role, involved in amino acid efflux from the vacuole to the cytoplasm. Capable of transporting large neutral amino acids including tyrosine, glutamine, asparagine, isoleucine and leucine. The chain is Vacuolar amino acid transporter 3 (AVT3) from Saccharomyces cerevisiae (strain ATCC 204508 / S288c) (Baker's yeast).